Consider the following 31-residue polypeptide: Cytochrome b6-f complex subunit 6 (31 aa).

A helical membrane pass occupies residues 4-26 (ITSYFGFLLAALTVTSALFIGLS).

This sequence belongs to the PetL family. The 4 large subunits of the cytochrome b6-f complex are cytochrome b6, subunit IV (17 kDa polypeptide, PetD), cytochrome f and the Rieske protein, while the 4 small subunits are PetG, PetL, PetM and PetN. The complex functions as a dimer.

Its subcellular location is the plastid. The protein resides in the chloroplast thylakoid membrane. Functionally, component of the cytochrome b6-f complex, which mediates electron transfer between photosystem II (PSII) and photosystem I (PSI), cyclic electron flow around PSI, and state transitions. PetL is important for photoautotrophic growth as well as for electron transfer efficiency and stability of the cytochrome b6-f complex. In Daucus carota (Wild carrot), this protein is Cytochrome b6-f complex subunit 6.